A 336-amino-acid chain; its full sequence is Adenylate isopentenyltransferase 3, chloroplastic (336 aa).

The transit peptide at 1–55 (MIMKISMAMCKQPLPPSPTLDFPPARFGPNMLTLNPYGPKDKVVVIMGATGTGKS) directs the protein to the chloroplast. 48–55 (GATGTGKS) lines the ATP pocket. Cysteine 333 carries the cysteine methyl ester modification. A lipid anchor (S-farnesyl cysteine) is attached at cysteine 333. Positions 334-336 (LVA) are cleaved as a propeptide — removed in mature form.

Belongs to the IPP transferase family. Post-translationally, farnesylated. In terms of tissue distribution, expressed the phloem companion cells.

It localises to the plastid. It is found in the chloroplast. The protein resides in the nucleus membrane. The protein localises to the cytoplasm. The enzyme catalyses dimethylallyl diphosphate + ADP = N(6)-(dimethylallyl)adenosine 5'-diphosphate + diphosphate. It catalyses the reaction dimethylallyl diphosphate + ATP = N(6)-(dimethylallyl)adenosine 5'-triphosphate + diphosphate. Functionally, involved in cytokinin biosynthesis. Catalyzes the transfer of an isopentenyl group from dimethylallyl diphosphate (DMAPP) to ATP and ADP. This Arabidopsis thaliana (Mouse-ear cress) protein is Adenylate isopentenyltransferase 3, chloroplastic (IPT3).